We begin with the raw amino-acid sequence, 197 residues long: CASP-like protein 0U1 (197 aa).

Residues 1–13 (MDDFDPTVTNSPK) lie on the Cytoplasmic side of the membrane. Residues 14–34 (FRLIAVQCLFSITAFAAMLSQ) traverse the membrane as a helical segment. Over 35–63 (RHGLAGPDEMTLEECGPQACGYQKFSNFK) the chain is Extracellular. The chain crosses the membrane as a helical span at residues 64–84 (FLIAVCIIYAVFSLVVMAAYL). Residues 85-99 (LQRVPPPVTELTAYT) are Cytoplasmic-facing. The chain crosses the membrane as a helical span at residues 100–120 (VMNVLLFAAFAMSATSCNITI). The Extracellular segment spans residues 121-135 (VDPVYPVCKRATSAK). A helical transmembrane segment spans residues 136–156 (ASIAFAFFTWLAVCFSMLFTY). Residues 157–197 (KEWRDVDYHVPGSGAYEFVPGVTSGSSRSSYPPQASSSSYA) are Cytoplasmic-facing. A disordered region spans residues 178–197 (VTSGSSRSSYPPQASSSSYA). Over residues 180–197 (SGSSRSSYPPQASSSSYA) the composition is skewed to low complexity.

This sequence belongs to the Casparian strip membrane proteins (CASP) family. As to quaternary structure, homodimer and heterodimers.

The protein resides in the cell membrane. This is CASP-like protein 0U1 from Micromonas commoda (strain RCC299 / NOUM17 / CCMP2709) (Picoplanktonic green alga).